The following is a 158-amino-acid chain: Transcription elongation factor GreB (158 aa).

The stretch at 53-75 (KRRLREIDRRVRFLTKRLEVLQI) forms a coiled coil.

This sequence belongs to the GreA/GreB family. GreB subfamily.

Its function is as follows. Necessary for efficient RNA polymerase transcription elongation past template-encoded arresting sites. The arresting sites in DNA have the property of trapping a certain fraction of elongating RNA polymerases that pass through, resulting in locked ternary complexes. Cleavage of the nascent transcript by cleavage factors such as GreA or GreB allows the resumption of elongation from the new 3'terminus. GreB releases sequences of up to 9 nucleotides in length. This chain is Transcription elongation factor GreB, found in Haemophilus influenzae (strain ATCC 51907 / DSM 11121 / KW20 / Rd).